A 156-amino-acid polypeptide reads, in one-letter code: Small ribosomal subunit protein uS7c (156 aa).

The protein belongs to the universal ribosomal protein uS7 family. As to quaternary structure, part of the 30S ribosomal subunit.

It is found in the plastid. The protein localises to the chloroplast. Its function is as follows. One of the primary rRNA binding proteins, it binds directly to 16S rRNA where it nucleates assembly of the head domain of the 30S subunit. The sequence is that of Small ribosomal subunit protein uS7c (rps7) from Phaeodactylum tricornutum (strain CCAP 1055/1).